We begin with the raw amino-acid sequence, 652 residues long: Forkhead box protein O1-A (652 aa).

Disordered stretches follow at residues 1-57 (MADA…EPSS), 208-277 (SSWW…NSHS), and 359-406 (NLLS…QQTQ). The span at 41-57 (DSNTSSPAPSVKQEPSS) shows a compositional bias: polar residues. Positions 134-228 (WGNMSYADLI…KSGKSPRRRA (95 aa)) form a DNA-binding region, fork-head. Over residues 238–249 (AKSRGRAAKKKL) the composition is skewed to basic residues. Positions 362 to 397 (SPKNPSTGGPGSGSNQSSPSSLMQASPGYSPYSSPG) are enriched in low complexity.

The protein localises to the cytoplasm. It localises to the nucleus. Transcription factor that regulates metabolic homeostasis in response to oxidative stress. Binds to the consensus sequence 5'-TT[G/A]TTTTG-3' and the related Daf-16 family binding element (DBE) with consensus sequence 5'-TT[G/A]TTTAC-3'. Main regulator of redox balance and osteoblast numbers and controls bone mass. Orchestrates the endocrine function of the skeleton in regulating glucose metabolism. May be involved in regulating cellular homeostasis in the eye. May act as a positive regulator of apoptosis in cardiac smooth muscle cells as a result of its transcriptional activation of pro-apoptotic genes. The sequence is that of Forkhead box protein O1-A (foxo1a) from Danio rerio (Zebrafish).